Here is a 387-residue protein sequence, read N- to C-terminus: Queuine tRNA-ribosyltransferase (387 aa).

Catalysis depends on Asp93, which acts as the Proton acceptor. Substrate contacts are provided by residues 93–97 (DSGGF), Asp147, Gln190, and Gly217. An RNA binding region spans residues 248-254 (GVGTPDD). Asp267 (nucleophile) is an active-site residue. The RNA binding; important for wobble base 34 recognition stretch occupies residues 272–276 (TRAGR). Residues Cys305, Cys307, Cys310, and His336 each contribute to the Zn(2+) site.

Belongs to the queuine tRNA-ribosyltransferase family. In terms of assembly, homodimer. Within each dimer, one monomer is responsible for RNA recognition and catalysis, while the other monomer binds to the replacement base PreQ1. Zn(2+) is required as a cofactor.

The catalysed reaction is 7-aminomethyl-7-carbaguanine + guanosine(34) in tRNA = 7-aminomethyl-7-carbaguanosine(34) in tRNA + guanine. Its pathway is tRNA modification; tRNA-queuosine biosynthesis. Its function is as follows. Catalyzes the base-exchange of a guanine (G) residue with the queuine precursor 7-aminomethyl-7-deazaguanine (PreQ1) at position 34 (anticodon wobble position) in tRNAs with GU(N) anticodons (tRNA-Asp, -Asn, -His and -Tyr). Catalysis occurs through a double-displacement mechanism. The nucleophile active site attacks the C1' of nucleotide 34 to detach the guanine base from the RNA, forming a covalent enzyme-RNA intermediate. The proton acceptor active site deprotonates the incoming PreQ1, allowing a nucleophilic attack on the C1' of the ribose to form the product. After dissociation, two additional enzymatic reactions on the tRNA convert PreQ1 to queuine (Q), resulting in the hypermodified nucleoside queuosine (7-(((4,5-cis-dihydroxy-2-cyclopenten-1-yl)amino)methyl)-7-deazaguanosine). The sequence is that of Queuine tRNA-ribosyltransferase from Gluconacetobacter diazotrophicus (strain ATCC 49037 / DSM 5601 / CCUG 37298 / CIP 103539 / LMG 7603 / PAl5).